The sequence spans 223 residues: Triosephosphate isomerase (223 aa).

Substrate is bound at residue 6-8; sequence NLK. The active-site Electrophile is the H86. The Proton acceptor role is filled by E151. Substrate contacts are provided by G157 and S187.

It belongs to the triosephosphate isomerase family. In terms of assembly, homodimer.

The protein resides in the cytoplasm. It catalyses the reaction D-glyceraldehyde 3-phosphate = dihydroxyacetone phosphate. It participates in carbohydrate biosynthesis; gluconeogenesis. It functions in the pathway carbohydrate degradation; glycolysis; D-glyceraldehyde 3-phosphate from glycerone phosphate: step 1/1. Its function is as follows. Involved in the gluconeogenesis. Catalyzes stereospecifically the conversion of dihydroxyacetone phosphate (DHAP) to D-glyceraldehyde-3-phosphate (G3P). The polypeptide is Triosephosphate isomerase (Campylobacter jejuni subsp. doylei (strain ATCC BAA-1458 / RM4099 / 269.97)).